The following is a 66-amino-acid chain: Large ribosomal subunit protein bL33c (66 aa).

Belongs to the bacterial ribosomal protein bL33 family.

It is found in the plastid. It localises to the chloroplast. The polypeptide is Large ribosomal subunit protein bL33c (Morus indica (Mulberry)).